Here is a 191-residue protein sequence, read N- to C-terminus: Large ribosomal subunit protein uL6 (191 aa).

This sequence belongs to the universal ribosomal protein uL6 family. In terms of assembly, part of the 50S ribosomal subunit.

Functionally, this protein binds to the 23S rRNA, and is important in its secondary structure. It is located near the subunit interface in the base of the L7/L12 stalk, and near the tRNA binding site of the peptidyltransferase center. The polypeptide is Large ribosomal subunit protein uL6 (Cyanothece sp. (strain PCC 7425 / ATCC 29141)).